Reading from the N-terminus, the 1203-residue chain is DNA-directed RNA polymerase subunit beta' (1203 aa).

4 residues coordinate Zn(2+): Cys60, Cys62, Cys75, and Cys78. Mg(2+)-binding residues include Asp449, Asp451, and Asp453. Residues Cys818, Cys892, Cys899, and Cys902 each coordinate Zn(2+).

This sequence belongs to the RNA polymerase beta' chain family. In terms of assembly, the RNAP catalytic core consists of 2 alpha, 1 beta, 1 beta' and 1 omega subunit. When a sigma factor is associated with the core the holoenzyme is formed, which can initiate transcription. It depends on Mg(2+) as a cofactor. The cofactor is Zn(2+).

The catalysed reaction is RNA(n) + a ribonucleoside 5'-triphosphate = RNA(n+1) + diphosphate. DNA-dependent RNA polymerase catalyzes the transcription of DNA into RNA using the four ribonucleoside triphosphates as substrates. This chain is DNA-directed RNA polymerase subunit beta', found in Bacillus cereus (strain ZK / E33L).